A 273-amino-acid chain; its full sequence is MADQQRGHNTSDSRRKSLAGKRTSQQTPTSSLSSGGVSMAAATTGTGTASPCGACKFLRRKCVSGCIFAPHFGSDQGAARFAAVHKVFGASNVSKLLHHIPVNRRHDAVVTISYEAQARLSDPVYGCVSTILALQQQVASLQAELSVVQSQLINSRVAMANVMQQQTHHQQQQQQLVVMQQPEYSNNSSASTTLAGAAMNSFTMTADAAAVSYDVMAPTNLEHSLQPMPPHQQRRGDYQHEDEEESGADFSVAVGSTAVASKVIFPAEDFHRR.

A compositionally biased stretch (basic and acidic residues) spans 1-15 (MADQQRGHNTSDSRR). The segment at 1–39 (MADQQRGHNTSDSRRKSLAGKRTSQQTPTSSLSSGGVSM) is disordered. Residues 23–39 (TSQQTPTSSLSSGGVSM) are compositionally biased toward low complexity. The region spanning 50-152 (SPCGACKFLR…AELSVVQSQL (103 aa)) is the LOB domain. The interval 221-248 (LEHSLQPMPPHQQRRGDYQHEDEEESGA) is disordered.

This sequence belongs to the LOB domain-containing protein family. As to expression, expressed in roots and flowers.

This is LOB domain-containing protein 20 (LBD20) from Arabidopsis thaliana (Mouse-ear cress).